Reading from the N-terminus, the 111-residue chain is Antirepressor protein CarS (111 aa).

Monomer. Interacts with CarA and CarH.

Involved in carotenoid biosynthesis. Antagonizes the transcriptional repressor proteins CarA and CarH by preventing their binding to DNA. Can also dissociate preformed CarA-DNA complexes. Does not bind DNA. The protein is Antirepressor protein CarS (carS) of Myxococcus xanthus.